The following is a 429-amino-acid chain: Glutamate-1-semialdehyde 2,1-aminomutase 1 (429 aa).

Lysine 268 is modified (N6-(pyridoxal phosphate)lysine).

This sequence belongs to the class-III pyridoxal-phosphate-dependent aminotransferase family. HemL subfamily. As to quaternary structure, homodimer. It depends on pyridoxal 5'-phosphate as a cofactor.

The protein localises to the cytoplasm. It catalyses the reaction (S)-4-amino-5-oxopentanoate = 5-aminolevulinate. It participates in porphyrin-containing compound metabolism; protoporphyrin-IX biosynthesis; 5-aminolevulinate from L-glutamyl-tRNA(Glu): step 2/2. The chain is Glutamate-1-semialdehyde 2,1-aminomutase 1 from Listeria welshimeri serovar 6b (strain ATCC 35897 / DSM 20650 / CCUG 15529 / CIP 8149 / NCTC 11857 / SLCC 5334 / V8).